The chain runs to 121 residues: Small ribosomal subunit protein uS13 (121 aa).

The tract at residues 94–121 (GLPVRGQNTKNNSRTRKGPRRTVANKKK) is disordered. Basic residues predominate over residues 106-121 (SRTRKGPRRTVANKKK).

The protein belongs to the universal ribosomal protein uS13 family. Part of the 30S ribosomal subunit. Forms a loose heterodimer with protein S19. Forms two bridges to the 50S subunit in the 70S ribosome.

Functionally, located at the top of the head of the 30S subunit, it contacts several helices of the 16S rRNA. In the 70S ribosome it contacts the 23S rRNA (bridge B1a) and protein L5 of the 50S subunit (bridge B1b), connecting the 2 subunits; these bridges are implicated in subunit movement. Contacts the tRNAs in the A and P-sites. This Exiguobacterium sibiricum (strain DSM 17290 / CCUG 55495 / CIP 109462 / JCM 13490 / 255-15) protein is Small ribosomal subunit protein uS13.